A 196-amino-acid chain; its full sequence is Probable malonic semialdehyde reductase RutE (196 aa).

This sequence belongs to the nitroreductase family. HadB/RutE subfamily. It depends on FMN as a cofactor.

The catalysed reaction is 3-hydroxypropanoate + NADP(+) = 3-oxopropanoate + NADPH + H(+). Functionally, may reduce toxic product malonic semialdehyde to 3-hydroxypropionic acid, which is excreted. In Klebsiella pneumoniae subsp. pneumoniae (strain ATCC 700721 / MGH 78578), this protein is Probable malonic semialdehyde reductase RutE.